The following is a 190-amino-acid chain: Vascular endothelial growth factor A (190 aa).

Positions 1–26 are cleaved as a signal peptide; it reads MNFLLSWVHWSLALLLYLHHAKWSQA. Intrachain disulfides connect Cys-51/Cys-93, Cys-82/Cys-127, and Cys-86/Cys-129. Residue Asn-100 is glycosylated (N-linked (GlcNAc...) asparagine).

The protein belongs to the PDGF/VEGF growth factor family. As to quaternary structure, homodimer; disulfide-linked. Also found as heterodimer with PGF. Interacts with NRP1. Interacts with BSG. Interacts with CD82; this interaction inhibits VEGFA-mediated signaling pathway.

It localises to the secreted. In terms of biological role, growth factor active in angiogenesis, vasculogenesis and endothelial cell growth. Induces endothelial cell proliferation, promotes cell migration, inhibits apoptosis and induces permeabilization of blood vessels. Binds to the FLT1/VEGFR1 and KDR/VEGFR2 receptors, heparan sulfate and heparin. Binding to NRP1 receptor initiates a signaling pathway needed for motor neuron axon guidance and cell body migration, including for the caudal migration of facial motor neurons from rhombomere 4 to rhombomere 6 during embryonic development. Also binds the DEAR/FBXW7-AS1 receptor. The chain is Vascular endothelial growth factor A (VEGFA) from Sus scrofa (Pig).